The primary structure comprises 254 residues: 3-deoxy-manno-octulosonate cytidylyltransferase (254 aa).

The protein belongs to the KdsB family.

Its subcellular location is the cytoplasm. It catalyses the reaction 3-deoxy-alpha-D-manno-oct-2-ulosonate + CTP = CMP-3-deoxy-beta-D-manno-octulosonate + diphosphate. It participates in nucleotide-sugar biosynthesis; CMP-3-deoxy-D-manno-octulosonate biosynthesis; CMP-3-deoxy-D-manno-octulosonate from 3-deoxy-D-manno-octulosonate and CTP: step 1/1. It functions in the pathway bacterial outer membrane biogenesis; lipopolysaccharide biosynthesis. Functionally, activates KDO (a required 8-carbon sugar) for incorporation into bacterial lipopolysaccharide in Gram-negative bacteria. In Pseudomonas fluorescens (strain SBW25), this protein is 3-deoxy-manno-octulosonate cytidylyltransferase.